A 65-amino-acid polypeptide reads, in one-letter code: Small ribosomal subunit protein uS10 (65 aa).

It belongs to the universal ribosomal protein uS10 family. In terms of assembly, part of the 30S ribosomal subunit.

Functionally, involved in the binding of tRNA to the ribosomes. The protein is Small ribosomal subunit protein uS10 (rps10) of Desulfurococcus mucosus (Desulfurococcus mobilis).